The sequence spans 309 residues: Dicarboxylate carrier UCP2 (309 aa).

At 1–16 the chain is on the mitochondrial intermembrane side; sequence MVGFKATDVPPTATVK. 3 Solcar repeats span residues 11–106, 114–203, and 212–297; these read PTAT…VKQF, AGIG…IKDT, and DDLP…LKRA. An important for interaction with long-chain fatty acids region spans residues 16–63; the sequence is KFLGAGTAACIADLITFPLDTAKVRLQIQGESQGLARTAASAQYRGVL. Residues 17 to 40 traverse the membrane as a helical segment; the sequence is FLGAGTAACIADLITFPLDTAKVR. The Mitochondrial matrix portion of the chain corresponds to 41–77; that stretch reads LQIQGESQGLARTAASAQYRGVLGTILTMVRTEGPRS. A helical transmembrane segment spans residues 78 to 103; the sequence is LYNGLVAGLQRQMSFASVRIGLYDSV. Residues 104–119 lie on the Mitochondrial intermembrane side of the membrane; the sequence is KQFYTKGSEHAGIGSR. The helical transmembrane segment at 120-145 threads the bilayer; it reads LLAGSTTGALAVAVAQPTDVVKVRFQ. At 146–173 the chain is on the mitochondrial matrix side; sequence AQARAGGGRRYQSTVEAYKTIAREEGIR. The chain crosses the membrane as a helical span at residues 174–199; the sequence is GLWKGTSPNVARNAIVNCTELVTYDL. At 200–217 the chain is on the mitochondrial intermembrane side; that stretch reads IKDTLLKANLMTDDLPCH. The chain crosses the membrane as a helical span at residues 218 to 242; that stretch reads FTSAFGAGFCTTVIASPVDVVKTRY. At 243 to 268 the chain is on the mitochondrial matrix side; sequence MNSALGQYHSAGHCALTMLRKEGPRA. A helical transmembrane segment spans residues 269–294; the sequence is FYKGFMPSFLRLGSWNVVMFVTYEQL. An important for interaction with long-chain fatty acids region spans residues 278–285; it reads LRLGSWNV. Residues 295-309 lie on the Mitochondrial intermembrane side of the membrane; the sequence is KRALMAAYESREAPF.

The protein belongs to the mitochondrial carrier (TC 2.A.29) family. As to quaternary structure, homotetramer. Adopts an asymmetrical dimer of dimers functional form. Interacts with MICU1 (when methylated); leading to decrease the calcium sensitivity of MICU1. In terms of tissue distribution, expressed in a variety of organs, with predominant expression in the heart, lung and spleen.

The protein localises to the mitochondrion inner membrane. It catalyses the reaction L-aspartate(out) + phosphate(in) + H(+)(in) = L-aspartate(in) + phosphate(out) + H(+)(out). The enzyme catalyses oxaloacetate(out) + phosphate(in) + H(+)(in) = oxaloacetate(in) + phosphate(out) + H(+)(out). It carries out the reaction (S)-malate(out) + phosphate(in) + H(+)(in) = (S)-malate(in) + phosphate(out) + H(+)(out). The catalysed reaction is malonate(out) + phosphate(in) + H(+)(in) = malonate(in) + phosphate(out) + H(+)(out). It catalyses the reaction sulfate(out) + phosphate(in) + H(+)(in) = sulfate(in) + phosphate(out) + H(+)(out). The enzyme catalyses (S)-malate(out) = (S)-malate(in). It carries out the reaction L-aspartate(out) = L-aspartate(in). The catalysed reaction is phosphate(in) = phosphate(out). It catalyses the reaction chloride(in) = chloride(out). The enzyme catalyses H(+)(in) = H(+)(out). It carries out the reaction a long-chain fatty acid(out) = a long-chain fatty acid(in). Its function is as follows. Antiporter that exports dicarboxylate intermediates of the Krebs cycle in exchange for phosphate plus a proton across the inner membrane of mitochondria, a process driven by mitochondrial motive force with an overall impact on glycolysis, glutaminolysis and glutathione-dependent redox balance. Continuous export of oxaloacetate and related four-carbon dicarboxylates from mitochondrial matrix into the cytosol negatively regulates the oxidation of acetyl-CoA substrates via the Krebs cycle lowering the ATP/ADP ratio and reactive oxygen species (ROS) production. May mediate inducible proton entry into the mitochondrial matrix affecting ATP turnover as a protection mechanism against oxidative stress. The proton currents are most likely associated with fatty acid flipping across the inner membrane of mitochondria in a metabolic process regulated by free fatty acids and purine nucleotides. Regulates the use of glucose as a source of energy. Required for glucose-induced DRP1-dependent mitochondrial fission and neuron activation in the ventromedial nucleus of the hypothalamus (VMH). This mitochondrial adaptation mechanism modulates the VMH pool of glucose-excited neurons with an impact on systemic glucose homeostasis. Regulates ROS levels and metabolic reprogramming of macrophages during the resolution phase of inflammation. Attenuates ROS production in response to IL33 to preserve the integrity of the Krebs cycle required for persistent production of itaconate and subsequent GATA3-dependent differentiation of inflammation-resolving alternatively activated macrophages. Can unidirectionally transport anions including L-malate, L-aspartate, phosphate and chloride ions. Does not mediate adaptive thermogenesis. This is Dicarboxylate carrier UCP2 (Ucp2) from Rattus norvegicus (Rat).